The chain runs to 183 residues: Capsid protein (183 aa).

The disordered stretch occupies residues Asn136–Cys183. Residues Val149–Ser176 show a composition bias toward basic residues. Phosphoserine; by host occurs at positions 155, 162, and 170. A 1; half-length repeat occupies Ser155 to Pro161. Positions Ser155 to Gln177 are 3 X 8 AA repeats of S-P-R-R-R-[PR]-S-Q. Residues Arg158–Arg175 carry the Bipartite nuclear localization signal motif. 2 consecutive repeat copies span residues Ser162–Gln169 and Ser170–Gln177. The interval Gln177–Cys183 is RNA binding.

It belongs to the orthohepadnavirus core antigen family. Homodimerizes, then multimerizes. Interacts with cytosol exposed regions of viral L glycoprotein present in the reticulum-to-Golgi compartment. Interacts with human FLNB. Phosphorylated form interacts with host importin alpha; this interaction depends on the exposure of the NLS, which itself depends upon genome maturation and/or phosphorylation of the capsid protein. Interacts with host NUP153. In terms of processing, phosphorylated by host SRPK1, SRPK2, and maybe protein kinase C or GAPDH. Phosphorylation is critical for pregenomic RNA packaging. Protein kinase C phosphorylation is stimulated by HBx protein and may play a role in transport of the viral genome to the nucleus at the late step during the viral replication cycle.

It is found in the virion. Its subcellular location is the host cytoplasm. Self assembles to form an icosahedral capsid. Most capsids appear to be large particles with an icosahedral symmetry of T=4 and consist of 240 copies of capsid protein, though a fraction forms smaller T=3 particles consisting of 180 capsid proteins. Entering capsids are transported along microtubules to the nucleus. Phosphorylation of the capsid is thought to induce exposure of nuclear localization signal in the C-terminal portion of the capsid protein that allows binding to the nuclear pore complex via the importin (karyopherin-) alpha and beta. Capsids are imported in intact form through the nuclear pore into the nuclear basket, where it probably binds NUP153. Only capsids that contain the mature viral genome can release the viral DNA and capsid protein into the nucleoplasm. Immature capsids get stuck in the basket. Capsids encapsulate the pre-genomic RNA and the P protein. Pre-genomic RNA is reverse-transcribed into DNA while the capsid is still in the cytoplasm. The capsid can then either be directed to the nucleus, providing more genomes for transcription, or bud through the endoplasmic reticulum to provide new virions. The chain is Capsid protein from Hepatitis B virus genotype D subtype ayw (isolate France/Tiollais/1979) (HBV-D).